The following is a 214-amino-acid chain: Predicted GPI-anchored protein 57 (214 aa).

The N-terminal stretch at 1-18 (MLFTQLIILFTFISQIIC) is a signal peptide. A disordered region spans residues 36–101 (RGSSGHSSGG…SSGSSSGSRN (66 aa)). The segment covering 42 to 60 (SSGGGHSSSGSHSSGGGHS) has biased composition (gly residues). Low complexity predominate over residues 76–85 (SGSSSGSSSG). An N-linked (GlcNAc...) asparagine glycan is attached at N182. Residue G191 is the site of GPI-anchor amidated glycine attachment. Residues 192-214 (VSLNIPSTHFYVIGLAAAYSIVL) constitute a propeptide, removed in mature form.

This sequence belongs to the PGA37 family.

The protein localises to the secreted. Its subcellular location is the cell membrane. Its function is as follows. Predicted GPI-anchored protein which may have a role during host infection. The chain is Predicted GPI-anchored protein 57 (PGA57) from Candida albicans (strain SC5314 / ATCC MYA-2876) (Yeast).